Consider the following 308-residue polypeptide: MNKELQPKVIFLMGPTASGKTALALELAEKHNCEIISVDSALIYRGMDIGSAKPSADELARGPHRLIDIRDPRESYSAADFRADAIAEIELIVSMGKTPVLVGGTMMYFKALLEGLSPLPSADEAIRAEIQAEADEKGWEALHDQLREIDPVSAERIHPNDPQRLSRALEVYRISGKSMTELTQTKSAPLPYEVVQFAIAPRERKVLHDLIAQRFAIMLKQGFLEEVTELKARGDLHLDLPSMRCVGYRQCWQYLDGEFDYDTMVEKAVAATRQLAKRQLTWLRSWPELNWLESGAEGNLVTLMRQCR.

Residue 14–21 coordinates ATP; sequence GPTASGKT. 16 to 21 contacts substrate; sequence TASGKT. 3 interaction with substrate tRNA regions span residues 39–42, 163–167, and 244–249; these read DSAL, QRLSR, and RCVGYR.

This sequence belongs to the IPP transferase family. As to quaternary structure, monomer. The cofactor is Mg(2+).

It carries out the reaction adenosine(37) in tRNA + dimethylallyl diphosphate = N(6)-dimethylallyladenosine(37) in tRNA + diphosphate. In terms of biological role, catalyzes the transfer of a dimethylallyl group onto the adenine at position 37 in tRNAs that read codons beginning with uridine, leading to the formation of N6-(dimethylallyl)adenosine (i(6)A). In Shewanella baltica (strain OS223), this protein is tRNA dimethylallyltransferase.